We begin with the raw amino-acid sequence, 137 residues long: Small ribosomal subunit protein uS11 (137 aa).

2 disordered regions span residues 1–31 (MPPKSRGTGPKKTQKARRRDKKNVPHGAAHI) and 117–137 (TISDVTPQPHNGCRPPKRRRV). The span at 12–21 (KTQKARRRDK) shows a compositional bias: basic residues.

Belongs to the universal ribosomal protein uS11 family. As to quaternary structure, part of the 30S ribosomal subunit. Interacts with proteins S7 and S18. Binds to IF-3.

Functionally, located on the platform of the 30S subunit, it bridges several disparate RNA helices of the 16S rRNA. Forms part of the Shine-Dalgarno cleft in the 70S ribosome. The chain is Small ribosomal subunit protein uS11 from Rhodococcus jostii (strain RHA1).